The sequence spans 510 residues: Laccase (510 aa).

Plastocyanin-like domains are found at residues 45-79, 99-174, 242-317, and 372-506; these read PTKLWTYNGSLPGPTIKANRNEKVKVKWMNKLPLK, KTVV…LISD, YLEV…IVLK, and LTLT…MRPM. H103, H105, H151, and H153 together coordinate Cu cation. Residues H419, H422, H424, H491, C492, H493, H497, and M502 each coordinate Cu cation.

Belongs to the multicopper oxidase family. Requires Cu(2+) as cofactor.

The enzyme catalyses 4 hydroquinone + O2 = 4 benzosemiquinone + 2 H2O. Resistant to alkali and organic solvents such as methanol, ethanol and acetone. Resistant to EDTA, which might be explained by the spatial protection of copper ions in the active sites. Inhibited by DMSO. Strongly inhibited by Fe(2+) and DTT. In terms of biological role, multicopper oxidase that catalyzes the oxidation of a variety of substrates, including phenolic and non-phenolic compounds. Substrates include 2,6-dimethoxyphenol (2,6-DMP) and the non-phenolic compound 2,2'-azino-bis(3-ethylbenzothiazoline-6-sulfonic acid) (ABTS). Cannot use guaiacol and catechol. In Bacillus stratosphericus, this protein is Laccase.